The primary structure comprises 332 residues: Ketol-acid reductoisomerase (NADP(+)) (332 aa).

The KARI N-terminal Rossmann domain occupies 3 to 183 (TEIFYDADAD…GGARAGVIKT (181 aa)). NADP(+) contacts are provided by residues 26–29 (YGSQ), Ser-52, Ser-54, and 84–87 (DTKQ). His-109 is an active-site residue. Gly-135 provides a ligand contact to NADP(+). A KARI C-terminal knotted domain is found at 184–329 (TFTEETETDL…KKLRSLMSWT (146 aa)). Mg(2+) contacts are provided by Asp-192, Glu-196, Glu-228, and Glu-232. A substrate-binding site is contributed by Ser-253.

Belongs to the ketol-acid reductoisomerase family. Requires Mg(2+) as cofactor.

The enzyme catalyses (2R)-2,3-dihydroxy-3-methylbutanoate + NADP(+) = (2S)-2-acetolactate + NADPH + H(+). It catalyses the reaction (2R,3R)-2,3-dihydroxy-3-methylpentanoate + NADP(+) = (S)-2-ethyl-2-hydroxy-3-oxobutanoate + NADPH + H(+). Its pathway is amino-acid biosynthesis; L-isoleucine biosynthesis; L-isoleucine from 2-oxobutanoate: step 2/4. It participates in amino-acid biosynthesis; L-valine biosynthesis; L-valine from pyruvate: step 2/4. Involved in the biosynthesis of branched-chain amino acids (BCAA). Catalyzes an alkyl-migration followed by a ketol-acid reduction of (S)-2-acetolactate (S2AL) to yield (R)-2,3-dihydroxy-isovalerate. In the isomerase reaction, S2AL is rearranged via a Mg-dependent methyl migration to produce 3-hydroxy-3-methyl-2-ketobutyrate (HMKB). In the reductase reaction, this 2-ketoacid undergoes a metal-dependent reduction by NADPH to yield (R)-2,3-dihydroxy-isovalerate. The sequence is that of Ketol-acid reductoisomerase (NADP(+)) from Saccharopolyspora erythraea (strain ATCC 11635 / DSM 40517 / JCM 4748 / NBRC 13426 / NCIMB 8594 / NRRL 2338).